Reading from the N-terminus, the 248-residue chain is Serine/arginine-rich splicing factor 1 (248 aa).

Ser-2 carries the post-translational modification N-acetylserine. Ser-2 bears the Phosphoserine mark. Positions 16–91 (CRIYVGNLPP…YRLRVEFPRS (76 aa)) constitute an RRM 1 domain. Lys-30 participates in a covalent cross-link: Glycyl lysine isopeptide (Lys-Gly) (interchain with G-Cter in SUMO2). Lys-38 is modified (N6-acetyllysine; alternate). Residue Lys-38 forms a Glycyl lysine isopeptide (Lys-Gly) (interchain with G-Cter in SUMO2); alternate linkage. Positions 88-134 (FPRSGRGTGRGGGGGGGGGAPRGRYGPPSRRSENRVVVSGLPPSGSW) are disordered. Asymmetric dimethylarginine; alternate is present on residues Arg-93, Arg-97, and Arg-109. 3 positions are modified to omega-N-methylarginine; alternate: Arg-93, Arg-97, and Arg-109. Over residues 93–108 (RGTGRGGGGGGGGGAP) the composition is skewed to gly residues. At Arg-111 the chain carries Omega-N-methylarginine. In terms of domain architecture, RRM 2 spans 121 to 195 (NRVVVSGLPP…ETAYIRVKVD (75 aa)). Ser-133 is subject to Phosphoserine. The residue at position 179 (Lys-179) is an N6-acetyllysine. Residues 191–248 (RVKVDGPRSPSYGRSRSRSRSRSRNRSRSNSRSRSYSPRRSRGSPRYSPRHSRSRSRT) are disordered. Positions 198–247 (RSPSYGRSRSRSRSRSRNRSRSNSRSRSYSPRRSRGSPRYSPRHSRSRSR) are interaction with SAFB1. A phosphoserine mark is found at Ser-199 and Ser-201. Residue Tyr-202 is modified to Phosphotyrosine. 6 positions are modified to phosphoserine: Ser-205, Ser-207, Ser-209, Ser-231, Ser-234, and Ser-238. A compositionally biased stretch (basic residues) spans 205 to 248 (SRSRSRSRSRNRSRSNSRSRSYSPRRSRGSPRYSPRHSRSRSRT).

The protein belongs to the splicing factor SR family. Consists of two polypeptides of p32 and p33. Identified in the spliceosome C complex. Component of a ribonucleoprotein complex containing mRNAs and RNA-binding proteins including DDX5, HNRNPH2 and SRSF1 as well as splicing regulator ARVCF. In vitro, self-associates and binds SRSF2, SNRNP70 and U2AF1 but not U2AF2. Binds SREK1/SFRS12. Interacts with SAFB/SAFB1. Interacts with PSIP1/LEDGF. Interacts with RSRC1 (via Arg/Ser-rich domain). Interacts with ZRSR2/U2AF1-RS2. Interacts with CCDC55 (via C-terminus). Interacts with SRPK1 and a sliding docking interaction is essential for its sequential and processive phosphorylation by SRPK1. Interacts with NXF1. Interacts with CCNL1, CCNL2 and CDK11B. Interacts with RRP1B. Interacts (when phosphorylated in its RS domain) with TNPO3; promoting nuclear import. Interacts with ILDR1 (via C-terminus) and ILDR2. Phosphorylated by CLK1, CLK2, CLK3 and CLK4. Phosphorylated by SRPK1 at multiple serines in its RS domain via a directional (C-terminal to N-terminal) and a dual-track mechanism incorporating both processive phosphorylation (in which the kinase stays attached to the substrate after each round of phosphorylation) and distributive phosphorylation steps (in which the kinase and substrate dissociate after each phosphorylation event). The RS domain of SRSF1 binds to a docking groove in the large lobe of the kinase domain of SRPK1 and this induces certain structural changes in SRPK1 and/or RRM 2 domain of SRSF1, allowing RRM 2 to bind the kinase and initiate phosphorylation. The cycles continue for several phosphorylation steps in a processive manner (steps 1-8) until the last few phosphorylation steps (approximately steps 9-12). During that time, a mechanical stress induces the unfolding of the beta-4 motif in RRM 2, which then docks at the docking groove of SRPK1. This also signals RRM 2 to begin to dissociate, which facilitates SRSF1 dissociation after phosphorylation is completed. In terms of processing, asymmetrically dimethylated at arginines, probably by PRMT1, methylation promotes localization to nuclear speckles.

Its subcellular location is the cytoplasm. It localises to the nucleus speckle. Plays a role in preventing exon skipping, ensuring the accuracy of splicing and regulating alternative splicing. Interacts with other spliceosomal components, via the RS domains, to form a bridge between the 5'- and 3'-splice site binding components, U1 snRNP and U2AF. Can stimulate binding of U1 snRNP to a 5'-splice site-containing pre-mRNA. Binds to purine-rich RNA sequences, either the octamer, 5'-RGAAGAAC-3' (r=A or G) or the decamers, AGGACAGAGC/AGGACGAAGC. Binds preferentially to the 5'-CGAGGCG-3' motif in vitro. Three copies of the octamer constitute a powerful splicing enhancer in vitro, the ASF/SF2 splicing enhancer (ASE) which can specifically activate ASE-dependent splicing. May function as export adapter involved in mRNA nuclear export through the TAP/NXF1 pathway. In Pongo abelii (Sumatran orangutan), this protein is Serine/arginine-rich splicing factor 1 (SRSF1).